Consider the following 105-residue polypeptide: U2-lycotoxin-Ls1d (105 aa).

The signal sequence occupies residues 1 to 17; the sequence is MIKYVLISALLVVAVYS. Residues 18–41 constitute a propeptide that is removed on maturation; sequence FTIEDNEDALLEEAEDELDTEEER. 4 disulfide bridges follow: Cys-51–Cys-67, Cys-58–Cys-97, Cys-60–Cys-83, and Cys-69–Cys-81.

This sequence belongs to the neurotoxin 04 (omega-agtx) family. 01 (type I omega-agtx) subfamily. In terms of tissue distribution, expressed by the venom gland.

It is found in the secreted. Functionally, insecticidal to house crickets. It induces an excitatory slow-onset impact that leads to irreversible spastic paralysis. It also modifies human voltage-gated potassium channel Kv1.5/KCNA5. Most likely, it binds to the voltage-sensing domain of the channel, suggesting it does not block the pore but prevents its opening at physiological membrane potentials. The recombinant peptide binds to the channel in an irreversible manner and slows down the hKv1.5 current activation kinetics. It is not toxic to mice, when intracranially injected (at 0.5 ug/g mouse). The protein is U2-lycotoxin-Ls1d of Lycosa singoriensis (Wolf spider).